Consider the following 638-residue polypeptide: Chaperone protein DnaK (638 aa).

Threonine 196 is modified (phosphothreonine; by autocatalysis). The segment at 592–638 is disordered; sequence ASNLYQQPGAEAGAAPQPETNGQQESKGGDGAVNAEYEVIDGDDDKK. The span at 597-610 shows a compositional bias: low complexity; sequence QQPGAEAGAAPQPE. The segment covering 629–638 has biased composition (acidic residues); the sequence is EVIDGDDDKK.

This sequence belongs to the heat shock protein 70 family.

Acts as a chaperone. This chain is Chaperone protein DnaK, found in Chlorobaculum parvum (strain DSM 263 / NCIMB 8327) (Chlorobium vibrioforme subsp. thiosulfatophilum).